The primary structure comprises 448 residues: tRNA modification GTPase MnmE (448 aa).

3 residues coordinate (6S)-5-formyl-5,6,7,8-tetrahydrofolate: R24, E81, and K120. The TrmE-type G domain maps to 216–373 (GLNVVLVGAP…LKRTLLREAG (158 aa)). Residue N226 coordinates K(+). Residues 226-231 (NVGKSS), 245-251 (TDIAGTT), and 270-273 (DTAG) each bind GTP. S230 is a binding site for Mg(2+). Residues T245, I247, and T250 each coordinate K(+). Residue T251 coordinates Mg(2+). Residue K448 coordinates (6S)-5-formyl-5,6,7,8-tetrahydrofolate.

This sequence belongs to the TRAFAC class TrmE-Era-EngA-EngB-Septin-like GTPase superfamily. TrmE GTPase family. In terms of assembly, homodimer. Heterotetramer of two MnmE and two MnmG subunits. The cofactor is K(+).

Its subcellular location is the cytoplasm. Its function is as follows. Exhibits a very high intrinsic GTPase hydrolysis rate. Involved in the addition of a carboxymethylaminomethyl (cmnm) group at the wobble position (U34) of certain tRNAs, forming tRNA-cmnm(5)s(2)U34. The polypeptide is tRNA modification GTPase MnmE (Neisseria meningitidis serogroup C / serotype 2a (strain ATCC 700532 / DSM 15464 / FAM18)).